An 819-amino-acid polypeptide reads, in one-letter code: Phenylalanine--tRNA ligase beta subunit (819 aa).

Residues 42 to 154 (RGGLRGLVIG…SDAPVGMPAA (113 aa)) enclose the tRNA-binding domain. Residues 412–488 (LKPHLISLSF…RIYGYNQVEL (77 aa)) form the B5 domain. 4 residues coordinate Mg(2+): Asp466, Asp472, Glu475, and Glu476. The region spanning 726-819 (PRFPEVKRDL…LEQKLGAQLR (94 aa)) is the FDX-ACB domain.

It belongs to the phenylalanyl-tRNA synthetase beta subunit family. Type 1 subfamily. Tetramer of two alpha and two beta subunits. Mg(2+) is required as a cofactor.

The protein resides in the cytoplasm. It carries out the reaction tRNA(Phe) + L-phenylalanine + ATP = L-phenylalanyl-tRNA(Phe) + AMP + diphosphate + H(+). The polypeptide is Phenylalanine--tRNA ligase beta subunit (Porphyromonas gingivalis (strain ATCC BAA-308 / W83)).